A 96-amino-acid polypeptide reads, in one-letter code: Co-chaperonin GroES (96 aa).

The protein belongs to the GroES chaperonin family. Heptamer of 7 subunits arranged in a ring. Interacts with the chaperonin GroEL.

The protein resides in the cytoplasm. Functionally, together with the chaperonin GroEL, plays an essential role in assisting protein folding. The GroEL-GroES system forms a nano-cage that allows encapsulation of the non-native substrate proteins and provides a physical environment optimized to promote and accelerate protein folding. GroES binds to the apical surface of the GroEL ring, thereby capping the opening of the GroEL channel. In Methylobacterium radiotolerans (strain ATCC 27329 / DSM 1819 / JCM 2831 / NBRC 15690 / NCIMB 10815 / 0-1), this protein is Co-chaperonin GroES.